Consider the following 739-residue polypeptide: Nucleoprotein (739 aa).

Residues 334–363 are a coiled coil; that stretch reads VNVGEQYQQLREAATEAEKQLQQYAESREL. The interval 415 to 646 is disordered; that stretch reads PKTSGHYDDD…QDSDNTQPEH (232 aa). 2 stretches are compositionally biased toward low complexity: residues 449–458 and 504–514; these read SQDTTIPDVV and KGGQQKNSQKG. The segment covering 520-530 has biased composition (polar residues); it reads RQTQSRPTQNI. The segment covering 567–579 has biased composition (acidic residues); the sequence is EEADPLDDADDET. A compositionally biased stretch (basic and acidic residues) spans 611-638; it reads YRDHSEKKELPQDERQDQDHTQEARNQD.

The protein belongs to the filoviruses nucleoprotein family. As to quaternary structure, homooligomer. Homomultimerizes to form the nucleocapsid. Binds to viral genomic RNA. Interacts with VP35 and VP30 to form the nucleocapsid. Interacts with host PPP2R5C; this interaction leads to VP30 dephosphorylation and viral transcription. Interacts with VP24; this interaction facilitates nucleocapsid assembly and genome packaging. Interacts with matrix protein VP40; this interaction allows recruitment of the nucleocapsid into progeny virions. Interacts with host STAU1. Interacts with host NXF1 (via RNA-binding domain); this interaction recruits NXF1 to the inclusion bodies were viral replication takes place, probably to export viral mRNA-NXF1 complexes from these sites. Interacts with host CCDC92; this interaction sequesters NP in the host cytoplasm. Interacts with host TRIM14. In terms of processing, phosphorylated and O-glycosylated by host. Acetylated by host EP300 in vitro.

The protein resides in the virion. It localises to the host cytoplasm. Oligomerizes into helical capsid to encapsidate the viral genome, protecting it from nucleases and the cellular innate immune response. VP35 binds to and stabilizes monomeric NP, keeping it soluble. Upon virus replication, NP is recruited to bind cooperatively viral genomic RNA and VP35 is released. The encapsidated genomic RNA is termed the nucleocapsid and serves as template for transcription and replication. The nucleocapsid is helical with a pitch of 10.81 NP per turn and a diameter of about 22nm. Each NP binds to six nucleotides of viral genomic RNA, three being exposed to the solvant and three hidden into the nucleocapsid. Also recruits host PPP2R5C phosphatase to dephosphorylate VP30 and thereby promote viral transcription. Upon virion assembly and budding, NP binds to VP24 and possibly host STAU1. This is Nucleoprotein (NP) from Zaire ebolavirus (strain Gabon-94) (ZEBOV).